We begin with the raw amino-acid sequence, 257 residues long: Phosphate import ATP-binding protein PstB (257 aa).

The ABC transporter domain occupies 11–252; it reads IQVRNLNFYY…PAKKQTEDYI (242 aa). 43–50 lines the ATP pocket; the sequence is GPSGCGKS.

It belongs to the ABC transporter superfamily. Phosphate importer (TC 3.A.1.7) family. The complex is composed of two ATP-binding proteins (PstB), two transmembrane proteins (PstC and PstA) and a solute-binding protein (PstS).

The protein resides in the cell inner membrane. It carries out the reaction phosphate(out) + ATP + H2O = ADP + 2 phosphate(in) + H(+). Functionally, part of the ABC transporter complex PstSACB involved in phosphate import. Responsible for energy coupling to the transport system. The sequence is that of Phosphate import ATP-binding protein PstB from Escherichia coli O6:K15:H31 (strain 536 / UPEC).